A 350-amino-acid chain; its full sequence is Atypical chemokine receptor 4 (350 aa).

Residues 1-42 (MALEQNQSTDYYYEENEMNGTYDYSQYELICIKEDVREFAKV) lie on the Extracellular side of the membrane. N-linked (GlcNAc...) asparagine glycans are attached at residues Asn6 and Asn19. The chain crosses the membrane as a helical span at residues 43–63 (FLPVFLTIVFVIGLAGNSMVV). At 64 to 87 (AIYAYYKKQRTKTDVYILNLAVAD) the chain is on the cytoplasmic side. Residues 88–108 (LLLLFTLPFWAVNAVHGWVLG) form a helical membrane-spanning segment. The Extracellular portion of the chain corresponds to 109-113 (KIMCK). An intrachain disulfide couples Cys112 to Cys184. Residues 114 to 134 (ITSALYTLNFVSGMQFLACIS) traverse the membrane as a helical segment. Residues 135–154 (IDRYVAVTKVPSQSGVGKPC) lie on the Cytoplasmic side of the membrane. A helical membrane pass occupies residues 155-175 (WIICFCVWMAAILLSIPQLVF). The Extracellular segment spans residues 176–201 (YTVNDNARCIPIFPRYLGTSMKALIQ). Residues 202 to 222 (MLEICIGFVVPFLIMGVCYFI) form a helical membrane-spanning segment. Topologically, residues 223 to 240 (TARTLMKMPNIKISRPLK) are cytoplasmic. The chain crosses the membrane as a helical span at residues 241-261 (VLLTVVIVFIVTQLPYNIVKF). Over 262–289 (CRAIDIIYSLITSCNMSKRMDIAIQVTE) the chain is Extracellular. Residues 290-310 (SIALFHSCLNPILYVFMGASF) form a helical membrane-spanning segment. Residues 311 to 350 (KNYVMKVAKKYGSWRRQRQSVEEFPFDSEGPTEPTSTFSI) lie on the Cytoplasmic side of the membrane.

Belongs to the G-protein coupled receptor 1 family. Atypical chemokine receptor subfamily. As to quaternary structure, forms heteromers with CXCR3. Interacts with ARRB1 and ARRB2. Post-translationally, the Ser/Thr residues in the C-terminal cytoplasmic tail may be phosphorylated. In terms of tissue distribution, predominantly expressed in heart. Lower expression in lung, pancreas, spleen, colon, skeletal muscle and small intestine.

Its subcellular location is the early endosome. The protein localises to the recycling endosome. It localises to the cell membrane. Functionally, atypical chemokine receptor that controls chemokine levels and localization via high-affinity chemokine binding that is uncoupled from classic ligand-driven signal transduction cascades, resulting instead in chemokine sequestration, degradation, or transcytosis. Also known as interceptor (internalizing receptor) or chemokine-scavenging receptor or chemokine decoy receptor. Acts as a receptor for chemokines CCL2, CCL8, CCL13, CCL19, CCL21 and CCL25. Chemokine-binding does not activate G-protein-mediated signal transduction but instead induces beta-arrestin recruitment, leading to ligand internalization. Plays an important role in controlling the migration of immune and cancer cells that express chemokine receptors CCR7 and CCR9, by reducing the availability of CCL19, CCL21, and CCL25 through internalization. Negatively regulates CXCR3-induced chemotaxis. Regulates T-cell development in the thymus. The protein is Atypical chemokine receptor 4 (ACKR4) of Homo sapiens (Human).